A 158-amino-acid polypeptide reads, in one-letter code: Transcription elongation factor GreA (158 aa).

Belongs to the GreA/GreB family.

In terms of biological role, necessary for efficient RNA polymerase transcription elongation past template-encoded arresting sites. The arresting sites in DNA have the property of trapping a certain fraction of elongating RNA polymerases that pass through, resulting in locked ternary complexes. Cleavage of the nascent transcript by cleavage factors such as GreA or GreB allows the resumption of elongation from the new 3'terminus. GreA releases sequences of 2 to 3 nucleotides. In Psychrobacter sp. (strain PRwf-1), this protein is Transcription elongation factor GreA.